A 277-amino-acid polypeptide reads, in one-letter code: Myelin proteolipid protein (277 aa).

Over 2–10 (GLLECCARC) the chain is Cytoplasmic. Residues cysteine 6, cysteine 7, and cysteine 10 are each lipidated (S-palmitoyl cysteine). Residues 11–36 (LIGAPFASLVATGLCFFGVALFCGCG) form a helical membrane-spanning segment. Residues 37–59 (HEALTGTEQLIETYFSKNYQDYE) are Extracellular-facing. Residues 60–88 (FLIDVIHGFQYFIYGTAAFFFLYGALLLA) traverse the membrane as a helical segment. Topologically, residues 89-151 (EGFYTTGAVR…LGKWLGHPDK (63 aa)) are cytoplasmic. S-palmitoyl cysteine attachment occurs at residues cysteine 109, cysteine 139, and cysteine 141. A helical transmembrane segment spans residues 152–178 (FVGITYVLTIIWLLVFACSAVPVYIYF). The Extracellular segment spans residues 179 to 238 (NTWTTCQSIGNPTKTSASIGTLCADARMYGILPWNAFPGKVCGSNLLSICKTSEFQMTFH). 2 cysteine pairs are disulfide-bonded: cysteine 184–cysteine 228 and cysteine 201–cysteine 220. Threonine 199 is lipidated: O-palmitoyl threonine. A helical transmembrane segment spans residues 239–268 (LFIAAFVGAAATLVSLVTFIIATTYNFAVL). Topologically, residues 269–277 (RLMGRGTKF) are cytoplasmic.

This sequence belongs to the myelin proteolipid protein family.

The protein localises to the cell membrane. Functionally, this is the major myelin protein from the central nervous system. It plays an important role in the formation or maintenance of the multilamellar structure of myelin. The polypeptide is Myelin proteolipid protein (PLP1) (Taeniopygia guttata (Zebra finch)).